The sequence spans 660 residues: Solute carrier family 5 member 4B (660 aa).

Residues 1–27 (MASTLSPSITPQTEEPPVVPVRIQNAA) lie on the Cytoplasmic side of the membrane. Residues 28–48 (DISVIVIYFIVVLAVGLWSMV) traverse the membrane as a helical segment. The Extracellular portion of the chain corresponds to 49–54 (RSNRGT). The chain crosses the membrane as a helical span at residues 55–75 (VGGFFLAGHDMAWWPMGASLF). The Cytoplasmic portion of the chain corresponds to 76–82 (ASNIGSN). Residues 83–103 (HFVGLAGTGAASGIAIAAVEW) traverse the membrane as a helical segment. The Extracellular segment spans residues 104 to 105 (NA). The chain crosses the membrane as a helical span at residues 106–126 (LLMVLVLGWVFLPIYIKAGVL). Residues 127 to 142 (TMPEYLRKRFGGKRLQ) lie on the Cytoplasmic side of the membrane. The helical transmembrane segment at 143–163 (IYLSVLSLFIMVALQTSSIIF) threads the bilayer. At 164–166 (SGA) the chain is on the extracellular side. The helical transmembrane segment at 167-187 (IFIQLALGLNLYLAVFILLAI) threads the bilayer. Residues 188 to 208 (TAFYTVAGGLASVIYTDSVQT) are Cytoplasmic-facing. Residues 209 to 229 (FIMLLGSLILMGFAFAEVGGY) traverse the membrane as a helical segment. Residues 230–277 (ESFTEKYMNAIPSVVEGDNLTISPKCYTPQPDSFHVFRDPVTGDIPWP) are Extracellular-facing. The helical transmembrane segment at 278–298 (GLIFGMTILAIWYWCADQVIV) threads the bilayer. Residues 299-313 (QRCLCGKNMSHVKAA) lie on the Cytoplasmic side of the membrane. The helical transmembrane segment at 314–334 (CILCGYLKLLPMFLMVMPGMI) threads the bilayer. The Extracellular portion of the chain corresponds to 335 to 380 (SRILYTDKVACVVPSECEKQCGTAVGCTNYAYPTLVLELMPDGLRG). Residues 381–401 (LMLSVMLASLMSSLTSIFNSA) form a helical membrane-spanning segment. Residues 402–423 (STLFTIDLYTKIRKKASERELM) are Cytoplasmic-facing. A helical membrane pass occupies residues 424–444 (IAGRIFGMVLIAVSILWVPLV). Over 445–455 (QVSQNGQLFHY) the chain is Extracellular. Residues 456–476 (IGSVSSYLGPPLGAVFMLAIF) form a helical membrane-spanning segment. Over 477–484 (FKRVNEQG) the chain is Cytoplasmic. The chain crosses the membrane as a helical span at residues 485–505 (AFWGLMVGLVVGLIRLIAEFV). Residues 506 to 526 (YGTGSCVAPSNCPKIICGVHY) are Extracellular-facing. Residues 527 to 547 (MYFAIILFFVSIIVILGVSFL) traverse the membrane as a helical segment. The Cytoplasmic portion of the chain corresponds to 548–639 (TEPIPDVHLY…DTSEKPLWRT (92 aa)). Residues 640–660 (VMNINAVLLLGVAVFVHAYFA) traverse the membrane as a helical segment.

It belongs to the sodium:solute symporter (SSF) (TC 2.A.21) family. In terms of tissue distribution, expressed in small intestine. Expressed in kidney.

Its subcellular location is the cell membrane. It catalyses the reaction D-glucose(out) + 2 Na(+)(out) = D-glucose(in) + 2 Na(+)(in). Its activity is regulated as follows. Inhibited by phlorizin. Functionally, low-affinity sodium/D-glucose symporter. Generates D-glucose-induced depolarization in a pH-independent manner. In Mus musculus (Mouse), this protein is Solute carrier family 5 member 4B.